Reading from the N-terminus, the 128-residue chain is Saitohin (128 aa).

Positions 77 to 128 (SYSSEESSRNGAEQGRQLSIEGPFQGQNCPSHPAAALPLPMRGESQATSCQV) are disordered.

As to quaternary structure, interacts with PRDX6. Highest expression in placenta, muscle, fetal brain, and adult brain, with lower expression in heart, kidney, stomach, testis, and adrenal gland. In the central nervous system, highest expression is in temporal lobe, hypothalamus, medulla and spinal cord, with lower expression in other brain regions.

The protein resides in the cytoplasm. It is found in the nucleus. This chain is Saitohin (STH), found in Homo sapiens (Human).